The primary structure comprises 130 residues: Anti-adapter protein IraD (130 aa).

It belongs to the GpW/Gp25 family. IraD subfamily. In terms of assembly, interacts with RssB.

The protein resides in the cytoplasm. Its function is as follows. Inhibits RpoS proteolysis by regulating RssB activity, thereby increasing the stability of the sigma stress factor RpoS during oxidative stress. Its effect on RpoS stability is due to its interaction with RssB, which probably blocks the interaction of RssB with RpoS, and the consequent delivery of the RssB-RpoS complex to the ClpXP protein degradation pathway. The protein is Anti-adapter protein IraD of Escherichia coli O9:H4 (strain HS).